Here is a 219-residue protein sequence, read N- to C-terminus: Dynein light chain Tctex-type 4 (219 aa).

Residues Met-1 to Pro-84 are disordered. The span at Arg-10–Gly-20 shows a compositional bias: basic and acidic residues. Ser-64 carries the phosphoserine modification.

The protein belongs to the dynein light chain Tctex-type family. Interacts with ENG/endoglin, TGFBR2 and TGFBR3. Interacts with PPP1CC.

The protein resides in the cell projection. The protein localises to the cilium. It is found in the flagellum. Its subcellular location is the cytoplasmic vesicle. It localises to the secretory vesicle. The protein resides in the acrosome. The protein localises to the cytoplasm. It is found in the cytoskeleton. Its subcellular location is the cilium axoneme. It localises to the nucleus. The protein resides in the microtubule organizing center. The sequence is that of Dynein light chain Tctex-type 4 (DYNLT4) from Sus scrofa (Pig).